The chain runs to 443 residues: Phosphoglucosamine mutase (443 aa).

The active-site Phosphoserine intermediate is Ser-101. Residues Ser-101, Asp-240, Asp-242, and Asp-244 each contribute to the Mg(2+) site. At Ser-101 the chain carries Phosphoserine.

Belongs to the phosphohexose mutase family. The cofactor is Mg(2+). In terms of processing, activated by phosphorylation.

It carries out the reaction alpha-D-glucosamine 1-phosphate = D-glucosamine 6-phosphate. Functionally, catalyzes the conversion of glucosamine-6-phosphate to glucosamine-1-phosphate. This is Phosphoglucosamine mutase from Psychromonas ingrahamii (strain DSM 17664 / CCUG 51855 / 37).